Consider the following 194-residue polypeptide: Type II methyltransferase M.MjaVI (194 aa).

Belongs to the N(4)/N(6)-methyltransferase family. N(4) subfamily.

It catalyses the reaction a 2'-deoxycytidine in DNA + S-adenosyl-L-methionine = an N(4)-methyl-2'-deoxycytidine in DNA + S-adenosyl-L-homocysteine + H(+). In terms of biological role, a beta subtype methylase that recognizes the double-stranded sequence 5'-CCGG-3', methylates C-1 on both strands, and protects the DNA from cleavage by the MjaVI endonuclease. This chain is Type II methyltransferase M.MjaVI (mjaVIM), found in Methanocaldococcus jannaschii (strain ATCC 43067 / DSM 2661 / JAL-1 / JCM 10045 / NBRC 100440) (Methanococcus jannaschii).